A 635-amino-acid polypeptide reads, in one-letter code: Transaminated amino acid decarboxylase (635 aa).

Lys-588 participates in a covalent cross-link: Glycyl lysine isopeptide (Lys-Gly) (interchain with G-Cter in ubiquitin).

The protein belongs to the TPP enzyme family. Mg(2+) serves as cofactor. It depends on thiamine diphosphate as a cofactor.

Its subcellular location is the cytoplasm. It carries out the reaction 4-methyl-2-oxopentanoate + H(+) = 3-methylbutanal + CO2. It catalyses the reaction (S)-3-methyl-2-oxopentanoate + H(+) = 2-methylbutanal + CO2. The catalysed reaction is indole-3-pyruvate + H(+) = indole-3-acetaldehyde + CO2. The enzyme catalyses 3-phenylpyruvate + H(+) = 2-phenylacetaldehyde + CO2. It carries out the reaction 4-methylsulfanyl-2-oxobutanoate + H(+) = 3-methylsulfanylpropanal + CO2. It catalyses the reaction 3-(4-hydroxyphenyl)pyruvate + H(+) = (4-hydroxyphenyl)acetaldehyde + CO2. It functions in the pathway amino-acid degradation; Ehrlich pathway. Its function is as follows. One of five 2-oxo acid decarboxylases (PDC1, PDC5, PDC6, ARO10, and THI3) involved in amino acid catabolism. The enzyme catalyzes the decarboxylation of amino acids, which, in a first step, have been transaminated to the corresponding 2-oxo acids (alpha-keto-acids). In a third step, the resulting aldehydes are reduced to alcohols, collectively referred to as fusel oils or alcohols. Its preferred substrates are the transaminated amino acids derived from phenylalanine (phenylpyruvate), tryptophan (3-(indol-3-yl)pyruvate), and probably tyrosine (4-hydroxyphenylpyruvate), but also isoleucine ((3S)-3-methyl-2-oxopentanoate, also alpha-keto-beta-methylvalerate) and methionine (4-methylthio-2-oxobutanoate), whereas transaminated leucine (4-methyl-2-oxopentanoate, also alpha-keto-isocaproate) is a low efficiency substrate and transaminated valine and pyruvate are no substrates. In analogy to the pyruvate decarboxylases the enzyme may in a side-reaction catalyze condensation (or carboligation) reactions leading to the formation of 2-hydroxy ketone, collectively called acyloins. This Saccharomyces cerevisiae (strain ATCC 204508 / S288c) (Baker's yeast) protein is Transaminated amino acid decarboxylase (ARO10).